The following is a 78-amino-acid chain: Large ribosomal subunit protein bL28 (78 aa).

Belongs to the bacterial ribosomal protein bL28 family.

This chain is Large ribosomal subunit protein bL28, found in Prochlorococcus marinus (strain MIT 9303).